Consider the following 476-residue polypeptide: Ribulose bisphosphate carboxylase large chain (476 aa).

A propeptide spanning residues methionine 1–serine 2 is cleaved from the precursor. Proline 3 bears the N-acetylproline mark. Residue lysine 14 is modified to N6,N6,N6-trimethyllysine. Asparagine 123 and threonine 173 together coordinate substrate. Catalysis depends on lysine 175, which acts as the Proton acceptor. Lysine 177 serves as a coordination point for substrate. Lysine 201, aspartate 203, and glutamate 204 together coordinate Mg(2+). Lysine 201 bears the N6-carboxylysine mark. Catalysis depends on histidine 294, which acts as the Proton acceptor. Substrate contacts are provided by arginine 295, histidine 327, and serine 379.

Belongs to the RuBisCO large chain family. Type I subfamily. Heterohexadecamer of 8 large chains and 8 small chains; disulfide-linked. The disulfide link is formed within the large subunit homodimers. The cofactor is Mg(2+). The disulfide bond which can form in the large chain dimeric partners within the hexadecamer appears to be associated with oxidative stress and protein turnover.

It is found in the plastid. It localises to the chloroplast. The catalysed reaction is 2 (2R)-3-phosphoglycerate + 2 H(+) = D-ribulose 1,5-bisphosphate + CO2 + H2O. It carries out the reaction D-ribulose 1,5-bisphosphate + O2 = 2-phosphoglycolate + (2R)-3-phosphoglycerate + 2 H(+). Functionally, ruBisCO catalyzes two reactions: the carboxylation of D-ribulose 1,5-bisphosphate, the primary event in carbon dioxide fixation, as well as the oxidative fragmentation of the pentose substrate in the photorespiration process. Both reactions occur simultaneously and in competition at the same active site. This Sorghum bicolor (Sorghum) protein is Ribulose bisphosphate carboxylase large chain.